The sequence spans 128 residues: Aspartate 1-decarboxylase (128 aa).

The Schiff-base intermediate with substrate; via pyruvic acid role is filled by S25. S25 carries the post-translational modification Pyruvic acid (Ser). T57 contacts substrate. Y58 functions as the Proton donor in the catalytic mechanism. 73 to 75 (GSA) is a binding site for substrate.

The protein belongs to the PanD family. Heterooctamer of four alpha and four beta subunits. Pyruvate is required as a cofactor. In terms of processing, is synthesized initially as an inactive proenzyme, which is activated by self-cleavage at a specific serine bond to produce a beta-subunit with a hydroxyl group at its C-terminus and an alpha-subunit with a pyruvoyl group at its N-terminus.

Its subcellular location is the cytoplasm. It catalyses the reaction L-aspartate + H(+) = beta-alanine + CO2. It participates in cofactor biosynthesis; (R)-pantothenate biosynthesis; beta-alanine from L-aspartate: step 1/1. In terms of biological role, catalyzes the pyruvoyl-dependent decarboxylation of aspartate to produce beta-alanine. The chain is Aspartate 1-decarboxylase from Paraburkholderia xenovorans (strain LB400).